The sequence spans 352 residues: UDP-N-acetylglucosamine--N-acetylmuramyl-(pentapeptide) pyrophosphoryl-undecaprenol N-acetylglucosamine transferase (352 aa).

UDP-N-acetyl-alpha-D-glucosamine contacts are provided by residues 11 to 13 (TGG), Asn120, Arg161, Ser188, and Gln286.

It belongs to the glycosyltransferase 28 family. MurG subfamily.

The protein resides in the cell inner membrane. It catalyses the reaction di-trans,octa-cis-undecaprenyl diphospho-N-acetyl-alpha-D-muramoyl-L-alanyl-D-glutamyl-meso-2,6-diaminopimeloyl-D-alanyl-D-alanine + UDP-N-acetyl-alpha-D-glucosamine = di-trans,octa-cis-undecaprenyl diphospho-[N-acetyl-alpha-D-glucosaminyl-(1-&gt;4)]-N-acetyl-alpha-D-muramoyl-L-alanyl-D-glutamyl-meso-2,6-diaminopimeloyl-D-alanyl-D-alanine + UDP + H(+). It functions in the pathway cell wall biogenesis; peptidoglycan biosynthesis. In terms of biological role, cell wall formation. Catalyzes the transfer of a GlcNAc subunit on undecaprenyl-pyrophosphoryl-MurNAc-pentapeptide (lipid intermediate I) to form undecaprenyl-pyrophosphoryl-MurNAc-(pentapeptide)GlcNAc (lipid intermediate II). The protein is UDP-N-acetylglucosamine--N-acetylmuramyl-(pentapeptide) pyrophosphoryl-undecaprenol N-acetylglucosamine transferase of Prochlorococcus marinus (strain NATL1A).